The primary structure comprises 294 residues: Acetyl-coenzyme A carboxylase carboxyl transferase subunit beta (294 aa).

One can recognise a CoA carboxyltransferase N-terminal domain in the interval 30–294 (IMTKCPECKK…PGVGGEVDGE (265 aa)). Positions 34, 37, 53, and 56 each coordinate Zn(2+). The C4-type zinc finger occupies 34 to 56 (CPECKKIMYTKELQKNLMVCNYC).

Belongs to the AccD/PCCB family. Acetyl-CoA carboxylase is a heterohexamer composed of biotin carboxyl carrier protein (AccB), biotin carboxylase (AccC) and two subunits each of ACCase subunit alpha (AccA) and ACCase subunit beta (AccD). It depends on Zn(2+) as a cofactor.

The protein localises to the cytoplasm. The enzyme catalyses N(6)-carboxybiotinyl-L-lysyl-[protein] + acetyl-CoA = N(6)-biotinyl-L-lysyl-[protein] + malonyl-CoA. It functions in the pathway lipid metabolism; malonyl-CoA biosynthesis; malonyl-CoA from acetyl-CoA: step 1/1. In terms of biological role, component of the acetyl coenzyme A carboxylase (ACC) complex. Biotin carboxylase (BC) catalyzes the carboxylation of biotin on its carrier protein (BCCP) and then the CO(2) group is transferred by the transcarboxylase to acetyl-CoA to form malonyl-CoA. This Listeria monocytogenes serovar 1/2a (strain ATCC BAA-679 / EGD-e) protein is Acetyl-coenzyme A carboxylase carboxyl transferase subunit beta.